The following is a 690-amino-acid chain: Peroxidase (690 aa).

The signal sequence occupies residues 1–20 (MIRARDLLLLALLGFISSAL). A disulfide bridge links cysteine 100 with cysteine 112. The active-site Proton acceptor is histidine 185. An N-linked (GlcNAc...) asparagine glycan is attached at asparagine 310. Cysteine 315 and cysteine 324 are joined by a disulfide. Histidine 437 serves as a coordination point for heme b. Cystine bridges form between cysteine 536/cysteine 592 and cysteine 636/cysteine 662.

This sequence belongs to the peroxidase family. XPO subfamily. Heme b is required as a cofactor.

It localises to the secreted. It carries out the reaction 2 a phenolic donor + H2O2 = 2 a phenolic radical donor + 2 H2O. Functionally, involved in the chorion hardening process, through protein cross-linking mediated by the formation of di- and tri-tyrosine bonds. The polypeptide is Peroxidase (Pxd) (Drosophila melanogaster (Fruit fly)).